A 382-amino-acid polypeptide reads, in one-letter code: Gap junction alpha-1 protein (382 aa).

At 2 to 23 (GDWSALGKLLDKVQAYSTAGGK) the chain is on the cytoplasmic side. Serine 5 carries the phosphoserine modification. A helical membrane pass occupies residues 24–44 (VWLSVLFIFRILLLGTAVESA). Topologically, residues 45–76 (WGDEQSAFRCNTQQPGCENVCYDKSFPISHVR) are extracellular. 2 cysteine pairs are disulfide-bonded: cysteine 54-cysteine 192 and cysteine 187-cysteine 198. A helical transmembrane segment spans residues 77 to 97 (FWVLQIIFVSVPTLLYLAHVF). The Cytoplasmic portion of the chain corresponds to 98-155 (YVMRKEEKLNKKEEELKVAQTDGVNVEMHLKQIEIKKFKYGIEEHGKVKMRGGLLRTY). A Glycyl lysine isopeptide (Lys-Gly) (interchain with G-Cter in SUMO) cross-link involves residue lysine 144. The chain crosses the membrane as a helical span at residues 156 to 176 (IISILFKSIFEVAFLLIQWYI). Residues 177 to 207 (YGFSLSAVYTCKRDPCPHQVDCFLSRPTEKT) are Extracellular-facing. Residues 208–228 (IFIIFMLVVSLVSLALNIIEL) form a helical membrane-spanning segment. Residues 229–382 (FYVFFKGVKD…SRPRPDDLEI (154 aa)) lie on the Cytoplasmic side of the membrane. Lysine 237 is covalently cross-linked (Glycyl lysine isopeptide (Lys-Gly) (interchain with G-Cter in SUMO)). The interaction with NOV stretch occupies residues 244–382 (SDPYHATSGA…SRPRPDDLEI (139 aa)). Tyrosine 247 carries the phosphotyrosine modification. Phosphoserine is present on residues serine 255 and serine 262. Residues 264 to 382 (KYAYFNGCSS…SRPRPDDLEI (119 aa)) are interaction with UBQLN4. Position 271 is an S-nitrosocysteine (cysteine 271). At threonine 275 the chain carries Phosphothreonine. The segment at 279 to 300 (SPMSPPGYKPVTGDRNNSSCRN) is disordered. Serine 306 and serine 314 each carry phosphoserine. Polar residues predominate over residues 317–332 (QNRMGQAGSTISNSHA). Positions 317–382 (QNRMGQAGST…SRPRPDDLEI (66 aa)) are disordered. Serine 325 carries the phosphoserine; by CK1 modification. A Phosphothreonine modification is found at threonine 326. Phosphoserine; by CK1 is present on residues serine 328 and serine 330. 2 positions are modified to phosphoserine: serine 344 and serine 365. Residues 362–374 (RPSSRASSRASSR) show a composition bias toward low complexity. Serine 368 is modified (phosphoserine; by PKC/PRKCG and PKC/PRKCD). 2 positions are modified to phosphoserine: serine 369 and serine 373.

The protein belongs to the connexin family. Alpha-type (group II) subfamily. A connexon is composed of a hexamer of connexins. Interacts with SGSM3. Interacts with RIC1/CIP150. Interacts with CNST and CSNK1D. Interacts (via C-terminus) with TJP1. Interacts (via C-terminus) with SRC (via SH3 domain). Interacts (not ubiquitinated) with UBQLN4 (via UBA domain). Interacts with NOV. Interacts with TMEM65. Interacts with ANK3/ANKG and PKP2. In terms of processing, phosphorylation at Ser-325, Ser-328 and Ser-330 by CK1 modulates gap junction assembly. Phosphorylated at Ser-368 by PRKCG; phosphorylation induces disassembly of gap junction plaques and inhibition of gap junction activity. Phosphorylation at Ser-368 by PRKCD triggers its internalization into small vesicles leading to proteasome-mediated degradation. Sumoylated with SUMO1, SUMO2 and SUMO3, which may regulate the level of functional Cx43 gap junctions at the plasma membrane. May be desumoylated by SENP1 or SENP2. Post-translationally, S-nitrosylation at Cys-271 is enriched at the muscle endothelial gap junction in arteries, it augments channel permeability and may regulate of smooth muscle cell to endothelial cell communication. In terms of processing, acetylated in the developing cortex; leading to delocalization from the cell membrane.

It is found in the cell membrane. It localises to the cell junction. Its subcellular location is the gap junction. The protein resides in the endoplasmic reticulum. Functionally, gap junction protein that acts as a regulator of bladder capacity. A gap junction consists of a cluster of closely packed pairs of transmembrane channels, the connexons, through which materials of low MW diffuse from one cell to a neighboring cell. May play a critical role in the physiology of hearing by participating in the recycling of potassium to the cochlear endolymph. Negative regulator of bladder functional capacity: acts by enhancing intercellular electrical and chemical transmission, thus sensitizing bladder muscles to cholinergic neural stimuli and causing them to contract. May play a role in cell growth inhibition through the regulation of NOV expression and localization. Plays an essential role in gap junction communication in the ventricles. The sequence is that of Gap junction alpha-1 protein (GJA1) from Macaca fascicularis (Crab-eating macaque).